We begin with the raw amino-acid sequence, 378 residues long: Uroporphyrinogen decarboxylase (378 aa).

Residues 40-44, Asp90, Tyr167, Ser222, and His355 each bind substrate; that span reads RQAGR.

The protein belongs to the uroporphyrinogen decarboxylase family. In terms of assembly, homodimer.

The protein resides in the cytoplasm. The enzyme catalyses uroporphyrinogen III + 4 H(+) = coproporphyrinogen III + 4 CO2. Its pathway is porphyrin-containing compound metabolism; protoporphyrin-IX biosynthesis; coproporphyrinogen-III from 5-aminolevulinate: step 4/4. Catalyzes the decarboxylation of four acetate groups of uroporphyrinogen-III to yield coproporphyrinogen-III. In Psychrobacter cryohalolentis (strain ATCC BAA-1226 / DSM 17306 / VKM B-2378 / K5), this protein is Uroporphyrinogen decarboxylase.